A 194-amino-acid polypeptide reads, in one-letter code: RxLR effector protein Avh240 (194 aa).

Residues 1–23 (MRPYFTLLLALAFILACTNLVEA) form the signal peptide. The short motif at 38–57 (RHLRTAVASVVDLPDDEDER) is the RxLR-dEER element. Residues 58–108 (LLGYNTVQLWRMRRTANKLMNGKLTTQKEAALKKWMASQQDKFLAKWLKSS) form a host plasma membrane-binding region.

This sequence belongs to the RxLR effector family. Homodimer. Interacts with host soybean aspartic protease AP1.

It localises to the secreted. Its subcellular location is the host cell membrane. Its function is as follows. Effector that suppresses plant defense responses during the early stages of pathogen infection. Suppresses cell death induced by effectors and PAMPs in plant hosts. Avh240 dimerizes and localizes at the plasma membrane to interfere with aspartic protease AP1 secretion, which presents an effective mechanism by which effector proteins suppress plant apoplastic immunity. This is RxLR effector protein Avh240 from Phytophthora sojae (Soybean stem and root rot agent).